The following is a 465-amino-acid chain: Neutrophil collagenase (465 aa).

A signal peptide spans 1–20 (MFRLKTLPLLIFLHTQLANA). The propeptide at 21–100 (FPVPEHLEEK…CGVPDSGDFL (80 aa)) is activation peptide. Asparagine 55 carries an N-linked (GlcNAc...) asparagine glycan. A Cysteine switch motif is present at residues 89-96 (PRCGVPDS). Zn(2+) is bound at residue cysteine 91. N-linked (GlcNAc...) asparagine glycosylation is present at asparagine 112. Aspartate 157 is a binding site for Ca(2+). 2 residues coordinate Zn(2+): histidine 167 and aspartate 169. Positions 174, 175, 177, and 179 each coordinate Ca(2+). Histidine 182 provides a ligand contact to Zn(2+). The Ca(2+) site is built by glycine 189, glycine 191, and aspartate 193. Histidine 195 contributes to the Zn(2+) binding site. Ca(2+)-binding residues include aspartate 197 and glutamate 200. Histidine 217 provides a ligand contact to Zn(2+). Glutamate 218 is an active-site residue. The Zn(2+) site is built by histidine 221 and histidine 227. Hemopexin repeat units follow at residues 276 to 325 (PKAC…WPFL), 326 to 372 (PNGL…GFPR), 374 to 420 (VQAI…FPGV), and 421 to 464 (NCRV…WLNC). A disulfide bond links cysteine 279 and cysteine 464. Residue aspartate 286 coordinates Ca(2+). Ca(2+) is bound by residues aspartate 378 and aspartate 425.

It belongs to the peptidase M10A family. Requires Ca(2+) as cofactor. It depends on Zn(2+) as a cofactor. In terms of tissue distribution, neutrophils. Expressed in uterus. Low levels in kidney and muscle.

The protein localises to the cytoplasmic granule. The protein resides in the secreted. It localises to the extracellular space. It is found in the extracellular matrix. The enzyme catalyses Cleavage of interstitial collagens in the triple helical domain. Unlike EC 3.4.24.7, this enzyme cleaves type III collagen more slowly than type I.. With respect to regulation, cannot be activated without removal of the activation peptide. Activated by matrilysin. In terms of biological role, can degrade fibrillar type I, II, and III collagens. May play a role in the degradation of collagen fibers during uterine involution. This Mus musculus (Mouse) protein is Neutrophil collagenase (Mmp8).